A 354-amino-acid polypeptide reads, in one-letter code: Histidinol-phosphate aminotransferase (354 aa).

Position 210 is an N6-(pyridoxal phosphate)lysine (Lys210).

Belongs to the class-II pyridoxal-phosphate-dependent aminotransferase family. Histidinol-phosphate aminotransferase subfamily. In terms of assembly, homodimer. The cofactor is pyridoxal 5'-phosphate.

The catalysed reaction is L-histidinol phosphate + 2-oxoglutarate = 3-(imidazol-4-yl)-2-oxopropyl phosphate + L-glutamate. The protein operates within amino-acid biosynthesis; L-histidine biosynthesis; L-histidine from 5-phospho-alpha-D-ribose 1-diphosphate: step 7/9. The sequence is that of Histidinol-phosphate aminotransferase from Clostridium botulinum (strain Kyoto / Type A2).